We begin with the raw amino-acid sequence, 741 residues long: Cytosolic phospholipase A2 (741 aa).

Residues 1–116 enclose the C2 domain; that stretch reads MSNIIVEHQY…KVAQMEHVTL (116 aa). The tract at residues 1 to 172 is phospholipid binding; that stretch reads MSNIIVEHQY…IKKLLKMENP (172 aa). D34, T35, D37, N59, D87, A88, and N89 together coordinate Ca(2+). Residues 132–729 form the PLA2c domain; the sequence is VCASTDLRFS…SLSEIENKKF (598 aa). Catalysis depends on S223, which acts as the Nucleophile. Positions 406–453 are disordered; it reads TSSSTMEEELEQIKPEHIVGDDSADNEEETQRGGTESADAEDERQRHA. Over residues 416-425 the composition is skewed to basic and acidic residues; sequence EQIKPEHIVG. At S498 the chain carries Phosphoserine; by MAPK. D540 (proton acceptor) is an active-site residue.

Post-translationally, activated by phosphorylation on a serine residue.

Its subcellular location is the cytoplasm. It is found in the cytoplasmic vesicle. It carries out the reaction a 1,2-diacyl-sn-glycero-3-phosphocholine + H2O = a 1-acyl-sn-glycero-3-phosphocholine + a fatty acid + H(+). The enzyme catalyses a 1-acyl-sn-glycero-3-phosphocholine + H2O = sn-glycerol 3-phosphocholine + a fatty acid + H(+). Its activity is regulated as follows. Stimulated by agonists such as ATP, EGF, thrombin and bradykinin as well as by cytosolic Ca(2+). Selectively hydrolyzes arachidonyl phospholipids in the sn-2 position releasing arachidonic acid. Together with its lysophospholipid activity, it is implicated in the initiation of the inflammatory response. The polypeptide is Cytosolic phospholipase A2 (pla2g4a) (Danio rerio (Zebrafish)).